We begin with the raw amino-acid sequence, 494 residues long: Probable cytosol aminopeptidase (494 aa).

Mn(2+) contacts are provided by K260 and D265. K272 is an active-site residue. Residues D283, D342, and E344 each contribute to the Mn(2+) site. R346 is a catalytic residue.

This sequence belongs to the peptidase M17 family. It depends on Mn(2+) as a cofactor.

The protein localises to the cytoplasm. It carries out the reaction Release of an N-terminal amino acid, Xaa-|-Yaa-, in which Xaa is preferably Leu, but may be other amino acids including Pro although not Arg or Lys, and Yaa may be Pro. Amino acid amides and methyl esters are also readily hydrolyzed, but rates on arylamides are exceedingly low.. The catalysed reaction is Release of an N-terminal amino acid, preferentially leucine, but not glutamic or aspartic acids.. Presumably involved in the processing and regular turnover of intracellular proteins. Catalyzes the removal of unsubstituted N-terminal amino acids from various peptides. The chain is Probable cytosol aminopeptidase from Bacillus cereus (strain AH187).